The chain runs to 1045 residues: Septation initiation network scaffold protein cdc11 (1045 aa).

Basic and acidic residues predominate over residues 1–11 (MEQLWLEHDLS). Disordered stretches follow at residues 1 to 269 (MEQL…NTKD) and 282 to 329 (RGRM…PSLS). The segment covering 18-39 (PQEQGSDNSSEPPTTSNVNNTQ) has biased composition (polar residues). 3 stretches are compositionally biased toward low complexity: residues 40 to 52 (STGR…STEH), 96 to 132 (KQSP…NVSN), and 152 to 165 (ISSS…SEGS). A compositionally biased stretch (polar residues) spans 166-176 (LKSQQSNTRSN). Low complexity predominate over residues 187 to 201 (ASNASSSSSVVSSPS). Composition is skewed to polar residues over residues 226–238 (NQLT…NSFE) and 320–329 (DSSNAFPSLS). S360 carries the post-translational modification Phosphoserine. The disordered stretch occupies residues 377–417 (DVGSSQSSSKTARLNSSPKSTLKTSSVKTRRSHSAQSSRKV). Residues 379-403 (GSSQSSSKTARLNSSPKSTLKTSSV) are compositionally biased toward polar residues. S558 carries the post-translational modification Phosphoserine. LRR repeat units follow at residues 604 to 625 (RIIQ…SELC), 627 to 646 (SIEE…GCPV), 647 to 668 (TIRD…SNLL), 669 to 690 (NLQY…SSLI), 691 to 712 (HLRE…QHLD), 713 to 734 (GLLK…NSNL), 736 to 757 (RLEE…SSLQ), 758 to 779 (NLMV…QPMI), 780 to 801 (HLRI…QFPH), 802 to 822 (LRTL…RRLK), 846 to 867 (DIRN…HMFL), 868 to 889 (GVRY…IATS), 892 to 913 (NLRV…KPLQ), 914 to 935 (MIHR…CDIL), and 940 to 962 (QLNV…IDDS). Positions 1005–1043 (AWRTRRKMYAEAILLACPHLEWLDGSDVSQSSRAAFTKS) constitute an LRRCT domain.

Interacts with sid4. When hyperphosphorylated, interacts with byr4. Also interacts with spg1, sid2, cdc13 and cdc16. Post-translationally, phosphorylated by cdc7 and cdk1. Hyperphosphorylated during anaphase. Dephosphorylated by par1.

It is found in the cytoplasm. The protein resides in the cytoskeleton. It localises to the microtubule organizing center. Its subcellular location is the spindle pole body. In terms of biological role, essential for the onset of septum formation. Involved in the organization of astral microtubules during mitosis. Acts as a bridge between sid4 and the other SIN proteins mediating their association with the spindle pole body (SPB). The sid4-cdc11 complex organizes a signaling hub on the SPB which coordinates cell and nuclear division. This chain is Septation initiation network scaffold protein cdc11 (cdc11), found in Schizosaccharomyces pombe (strain 972 / ATCC 24843) (Fission yeast).